The primary structure comprises 343 residues: Phosphoribosylformylglycinamidine cyclo-ligase (343 aa).

The protein belongs to the AIR synthase family.

The protein localises to the cytoplasm. The catalysed reaction is 2-formamido-N(1)-(5-O-phospho-beta-D-ribosyl)acetamidine + ATP = 5-amino-1-(5-phospho-beta-D-ribosyl)imidazole + ADP + phosphate + H(+). It functions in the pathway purine metabolism; IMP biosynthesis via de novo pathway; 5-amino-1-(5-phospho-D-ribosyl)imidazole from N(2)-formyl-N(1)-(5-phospho-D-ribosyl)glycinamide: step 2/2. This chain is Phosphoribosylformylglycinamidine cyclo-ligase, found in Thermodesulfovibrio yellowstonii (strain ATCC 51303 / DSM 11347 / YP87).